We begin with the raw amino-acid sequence, 319 residues long: MMVLRVEELVTGKKNSNGAAGEFLPGEFRNGEYEAAVALEKQEDLKTLPANSVKQGEEQRKSEKLREAELKKKKLEQRSKLENLEDLEIIVQLKKRKKYKKTKVPVVKEPEPEIMTEPVDVPRFLKAALENKLPVVEKFLSDKNSPDVCDEYKRTALHRACLEGHLAIVEKLMEAGAQIEFRDMLESTAIHWACRGGNADVLKLLLNKGAKISARDKLLSTALHVAVRTGHYECAEHLIACEADLNAKDREGDTPLHDAVRLNRYKMIRLLMTFGADLKVKNCAGKTPMDLVLHWQSGTKAIFDSLKENAYKNSRIATF.

A disordered region spans residues 46–65 (KTLPANSVKQGEEQRKSEKL). A coiled-coil region spans residues 53–89 (VKQGEEQRKSEKLREAELKKKKLEQRSKLENLEDLEI). Over residues 55 to 65 (QGEEQRKSEKL) the composition is skewed to basic and acidic residues. ANK repeat units lie at residues 152–181 (YKRTALHRACLEGHLAIVEKLMEAGAQIEF), 185–214 (LESTAIHWACRGGNADVLKLLLNKGAKISA), 218–247 (LLSTALHVAVRTGHYECAEHLIACEADLNA), 251–280 (EGDTPLHDAVRLNRYKMIRLLMTFGADLKV), and 284–315 (AGKTPMDLVLHWQSGTKAIFDSLKENAYKNSR).

Interacts with TTN/titin and YBX1. In terms of tissue distribution, expressed in heart, cardiac muscle.

Its subcellular location is the nucleus. Its function is as follows. May play an important role in endothelial cell activation. May act as a nuclear transcription factor that negatively regulates the expression of cardiac genes. The sequence is that of Ankyrin repeat domain-containing protein 1 (Ankrd1) from Mus musculus (Mouse).